Here is a 227-residue protein sequence, read N- to C-terminus: 2-C-methyl-D-erythritol 4-phosphate cytidylyltransferase (227 aa).

Belongs to the IspD/TarI cytidylyltransferase family. IspD subfamily.

The catalysed reaction is 2-C-methyl-D-erythritol 4-phosphate + CTP + H(+) = 4-CDP-2-C-methyl-D-erythritol + diphosphate. Its pathway is isoprenoid biosynthesis; isopentenyl diphosphate biosynthesis via DXP pathway; isopentenyl diphosphate from 1-deoxy-D-xylulose 5-phosphate: step 2/6. Catalyzes the formation of 4-diphosphocytidyl-2-C-methyl-D-erythritol from CTP and 2-C-methyl-D-erythritol 4-phosphate (MEP). This Deinococcus geothermalis (strain DSM 11300 / CIP 105573 / AG-3a) protein is 2-C-methyl-D-erythritol 4-phosphate cytidylyltransferase.